Reading from the N-terminus, the 307-residue chain is Ribonuclease Z (307 aa).

Zn(2+) contacts are provided by histidine 63, histidine 65, aspartate 67, histidine 68, histidine 141, aspartate 212, and histidine 270. Residue aspartate 67 is the Proton acceptor of the active site.

This sequence belongs to the RNase Z family. As to quaternary structure, homodimer. Zn(2+) is required as a cofactor.

It catalyses the reaction Endonucleolytic cleavage of RNA, removing extra 3' nucleotides from tRNA precursor, generating 3' termini of tRNAs. A 3'-hydroxy group is left at the tRNA terminus and a 5'-phosphoryl group is left at the trailer molecule.. Zinc phosphodiesterase, which displays some tRNA 3'-processing endonuclease activity. Probably involved in tRNA maturation, by removing a 3'-trailer from precursor tRNA. The protein is Ribonuclease Z of Bacillus mycoides (strain KBAB4) (Bacillus weihenstephanensis).